Here is a 243-residue protein sequence, read N- to C-terminus: Carboxy-S-adenosyl-L-methionine synthase (243 aa).

S-adenosyl-L-methionine is bound by residues Y40, 65-67 (GCS), 90-91 (DN), 118-119 (DI), N133, and R200.

Belongs to the class I-like SAM-binding methyltransferase superfamily. Cx-SAM synthase family. As to quaternary structure, homodimer.

It catalyses the reaction prephenate + S-adenosyl-L-methionine = carboxy-S-adenosyl-L-methionine + 3-phenylpyruvate + H2O. Its function is as follows. Catalyzes the conversion of S-adenosyl-L-methionine (SAM) to carboxy-S-adenosyl-L-methionine (Cx-SAM). The chain is Carboxy-S-adenosyl-L-methionine synthase from Shewanella loihica (strain ATCC BAA-1088 / PV-4).